Here is a 70-residue protein sequence, read N- to C-terminus: MPGILVRPDQSFEEAYRLFKKQVDRNLIVTEARARRFYEKPTERRKKEKIAARKKMLKRLYMLRRYESRL.

It belongs to the bacterial ribosomal protein bS21 family.

This chain is Small ribosomal subunit protein bS21, found in Nitratiruptor sp. (strain SB155-2).